We begin with the raw amino-acid sequence, 865 residues long: Xylosyltransferase 2 (865 aa).

Residues 1-15 (MVASARVQKLVRRYK) are Cytoplasmic-facing. Residues 16 to 36 (LAIATALAILLLQGLVVWSFS) traverse the membrane as a helical; Signal-anchor for type II membrane protein segment. Over 37–865 (GLEEDEAGEK…GPVKADGRLR (829 aa)) the chain is Lumenal. The segment at 41–157 (DEAGEKGRQR…EGAPQPTDNG (117 aa)) is disordered. Residues 53–65 (RPLDPGEGSKDTD) show a composition bias toward basic and acidic residues. A compositionally biased stretch (basic residues) spans 73–82 (STGRRHGRWR). The N-linked (GlcNAc...) asparagine glycan is linked to N122. Over residues 125 to 137 (GAAAGEALVGAAG) the composition is skewed to low complexity. 4 disulfide bridges follow: C162–C190, C206–C448, C467–C480, and C469–C478. Residues V239, D267, and 296-298 (TIW) each bind UDP-alpha-D-xylose. N327 carries an N-linked (GlcNAc...) asparagine glycan. UDP-alpha-D-xylose is bound at residue 400–401 (DW). UDP-alpha-D-xylose-binding positions include S481 and 504-505 (RK). 2 disulfide bridges follow: C581–C833 and C826–C839. N683 carries N-linked (GlcNAc...) asparagine glycosylation. A disordered region spans residues 846-865 (SLSPDPKSELGPVKADGRLR).

This sequence belongs to the glycosyltransferase 14 family. XylT subfamily. In terms of assembly, monomer. Mg(2+) serves as cofactor. The cofactor is Mn(2+). Contains disulfide bonds. In terms of tissue distribution, widely expressed. Expressed at higher level in kidney and pancreas.

The protein localises to the golgi apparatus membrane. The protein resides in the secreted. The catalysed reaction is UDP-alpha-D-xylose + L-seryl-[protein] = 3-O-(beta-D-xylosyl)-L-seryl-[protein] + UDP + H(+). It participates in glycan metabolism; chondroitin sulfate biosynthesis. It functions in the pathway glycan metabolism; heparan sulfate biosynthesis. In terms of biological role, catalyzes the first step in the biosynthesis of chondroitin sulfate, heparan sulfate and dermatan sulfate proteoglycans, such as DCN. Transfers D-xylose from UDP-D-xylose to specific serine residues of the core protein. The chain is Xylosyltransferase 2 (XYLT2) from Homo sapiens (Human).